The primary structure comprises 144 residues: Granulocyte-macrophage colony-stimulating factor (144 aa).

An N-terminal signal peptide occupies residues 1-17 (MWLQNLLLLGTVVCSFS). O-linked (GalNAc...) serine glycosylation occurs at Ser24. O-linked (GalNAc...) threonine glycosylation is present at Thr27. Asn44 and Asn54 each carry an N-linked (GlcNAc...) asparagine glycan. 2 disulfide bridges follow: Cys71–Cys113 and Cys105–Cys138.

Belongs to the GM-CSF family. In terms of assembly, monomer. The signaling GM-CSF receptor complex is a dodecamer of two head-to-head hexamers of two alpha, two beta, and two ligand subunits.

The protein localises to the secreted. Cytokine that stimulates the growth and differentiation of hematopoietic precursor cells from various lineages, including granulocytes, macrophages, eosinophils and erythrocytes. This is Granulocyte-macrophage colony-stimulating factor (CSF2) from Cervus elaphus (Red deer).